The following is a 67-amino-acid chain: Large ribosomal subunit protein bL35 (67 aa).

It belongs to the bacterial ribosomal protein bL35 family.

In Acidovorax ebreus (strain TPSY) (Diaphorobacter sp. (strain TPSY)), this protein is Large ribosomal subunit protein bL35.